Here is a 343-residue protein sequence, read N- to C-terminus: Transmembrane protein 120A (343 aa).

The Cytoplasmic portion of the chain corresponds to 1 to 132 (MHPPPPGPLG…KQAKFAYKDE (132 aa)). K130 is a binding site for CoA. A helical membrane pass occupies residues 133-152 (YEKFKLYLTIILILISFTCR). Residues 153–158 (FLLNSR) lie on the Extracellular side of the membrane. A helical transmembrane segment spans residues 159-177 (VTDAAFNFLLVWYYCTLTI). Residues 178-190 (RESILINNGSRIK) lie on the Cytoplasmic side of the membrane. Positions 187 and 188 each coordinate CoA. The chain crosses the membrane as a helical span at residues 191-209 (GWWVFHHYVSTFLSGVMLT). Over 210–218 (WPDGLMYQK) the chain is Extracellular. The chain crosses the membrane as a helical span at residues 219–240 (FRNQFLSFSMYQSFVQFLQYYY). The CoA site is built by Q237, Y240, Q241, and H283. Residues 241–270 (QSGCLYRLRALGERHTMDLTVEGFQSWMWR) lie on the Cytoplasmic side of the membrane. A helical membrane pass occupies residues 271–294 (GLTFLLPFLFFGHFWQLFNALTLF). Over 295 to 304 (NLARDPECKE) the chain is Extracellular. A helical membrane pass occupies residues 305–330 (WQVLMCGFPFLLLFLGNFFTTLRVVH). The Cytoplasmic portion of the chain corresponds to 331 to 343 (QKFHNQLHGSKKE). K332 lines the CoA pocket.

This sequence belongs to the TMEM120 family. In terms of assembly, homodimer. Forms heterooligomer with TMEM120B. Interacts with PKD2; TMEM120A inhibits PKD2 channel activity through the physical association of PKD2 with TMEM120A.

Its subcellular location is the cell membrane. It is found in the nucleus inner membrane. The protein localises to the endoplasmic reticulum. Functionally, multifunctional protein involved in mechanosensation, and plays an essential role in lipid metabolism and adipocyte differentiation. May function as an ion channel involved in sensing mechanical stimuli. Mediates the mechanosensitivity of the PKD2-TMEM120A channel complex through direct physical interaction. TMEM120A seems to affect mechanosensation by inhibiting PIEZO2 channels, possibly by altering cellular lipid content. TMEM120A is structurally similar to a lipid-modifying enzyme, ELOVL7, and contains a bound coenzyme A molecule, which suggests it might function as an enzyme in lipid metabolism. Additionnaly, implicated in innate immune response against Zika virus. Acts as a key activator of the antiviral signaling involving STING1. The chain is Transmembrane protein 120A from Bos taurus (Bovine).